Here is a 552-residue protein sequence, read N- to C-terminus: CTP synthase (552 aa).

The amidoligase domain stretch occupies residues 1-267; sequence MSKFVFVTGG…AHQTLELLRM (267 aa). A CTP-binding site is contributed by S13. S13 provides a ligand contact to UTP. ATP contacts are provided by residues 14 to 19 and D71; that span reads SIGKGI. Residues D71 and E141 each coordinate Mg(2+). Residues 148–150, 188–193, and K224 contribute to the CTP site; these read DIE and KTKPTQ. Residues 188 to 193 and K224 each bind UTP; that span reads KTKPTQ. The 243-residue stretch at 292 to 534 folds into the Glutamine amidotransferase type-1 domain; sequence TVALVGKYVQ…INAVLKRRNA (243 aa). G354 serves as a coordination point for L-glutamine. C381 functions as the Nucleophile; for glutamine hydrolysis in the catalytic mechanism. L-glutamine is bound by residues 382–385, E405, and R462; that span reads LGMQ. Catalysis depends on residues H507 and E509.

Belongs to the CTP synthase family. In terms of assembly, homotetramer.

It carries out the reaction UTP + L-glutamine + ATP + H2O = CTP + L-glutamate + ADP + phosphate + 2 H(+). It catalyses the reaction L-glutamine + H2O = L-glutamate + NH4(+). The catalysed reaction is UTP + NH4(+) + ATP = CTP + ADP + phosphate + 2 H(+). It functions in the pathway pyrimidine metabolism; CTP biosynthesis via de novo pathway; CTP from UDP: step 2/2. With respect to regulation, allosterically activated by GTP, when glutamine is the substrate; GTP has no effect on the reaction when ammonia is the substrate. The allosteric effector GTP functions by stabilizing the protein conformation that binds the tetrahedral intermediate(s) formed during glutamine hydrolysis. Inhibited by the product CTP, via allosteric rather than competitive inhibition. Catalyzes the ATP-dependent amination of UTP to CTP with either L-glutamine or ammonia as the source of nitrogen. Regulates intracellular CTP levels through interactions with the four ribonucleotide triphosphates. This chain is CTP synthase, found in Synechocystis sp. (strain ATCC 27184 / PCC 6803 / Kazusa).